The following is a 364-amino-acid chain: Uroporphyrinogen decarboxylase (364 aa).

Residues Arg-28–Arg-32, Asp-78, Tyr-160, Thr-215, and His-333 each bind substrate.

This sequence belongs to the uroporphyrinogen decarboxylase family. In terms of assembly, homodimer.

It is found in the cytoplasm. It carries out the reaction uroporphyrinogen III + 4 H(+) = coproporphyrinogen III + 4 CO2. Its pathway is porphyrin-containing compound metabolism; protoporphyrin-IX biosynthesis; coproporphyrinogen-III from 5-aminolevulinate: step 4/4. Catalyzes the decarboxylation of four acetate groups of uroporphyrinogen-III to yield coproporphyrinogen-III. This is Uroporphyrinogen decarboxylase from Burkholderia thailandensis (strain ATCC 700388 / DSM 13276 / CCUG 48851 / CIP 106301 / E264).